The primary structure comprises 460 residues: Kynurenine 3-monooxygenase (460 aa).

FAD-binding positions include valine 13, 32–34 (DFR), and alanine 53. L-kynurenine is bound by residues arginine 83 and tyrosine 97. FAD is bound by residues arginine 109, leucine 133, tyrosine 195, aspartate 314, and 325–328 (QGMN). Residues asparagine 373 and tyrosine 408 each coordinate L-kynurenine.

It belongs to the aromatic-ring hydroxylase family. KMO subfamily. The cofactor is FAD.

The protein localises to the mitochondrion outer membrane. The enzyme catalyses L-kynurenine + NADPH + O2 + H(+) = 3-hydroxy-L-kynurenine + NADP(+) + H2O. Its pathway is cofactor biosynthesis; NAD(+) biosynthesis; quinolinate from L-kynurenine: step 1/3. Its function is as follows. Catalyzes the hydroxylation of L-kynurenine (L-Kyn) to form 3-hydroxy-L-kynurenine (L-3OHKyn). Required for synthesis of quinolinic acid. This is Kynurenine 3-monooxygenase from Saccharomyces cerevisiae (strain ATCC 204508 / S288c) (Baker's yeast).